A 177-amino-acid polypeptide reads, in one-letter code: MSELVTVARPYAKAAFDFAVEHQAVAHWQAMLTFCAEVSRNERIAELLSGAVVPEKLAETFIAVCGEELDAAGQNLIRVMAENGRLTVLPDVLEQFTLWRAAQEATVEVDVISASTLKEEQLAKISAAMEQRLSRKVKLNCKIDKSVVAGVVIRAGDMVIDGSVRGRLERLADVLQS.

It belongs to the ATPase delta chain family. As to quaternary structure, F-type ATPases have 2 components, F(1) - the catalytic core - and F(0) - the membrane proton channel. F(1) has five subunits: alpha(3), beta(3), gamma(1), delta(1), epsilon(1). F(0) has three main subunits: a(1), b(2) and c(10-14). The alpha and beta chains form an alternating ring which encloses part of the gamma chain. F(1) is attached to F(0) by a central stalk formed by the gamma and epsilon chains, while a peripheral stalk is formed by the delta and b chains.

It localises to the cell inner membrane. In terms of biological role, f(1)F(0) ATP synthase produces ATP from ADP in the presence of a proton or sodium gradient. F-type ATPases consist of two structural domains, F(1) containing the extramembraneous catalytic core and F(0) containing the membrane proton channel, linked together by a central stalk and a peripheral stalk. During catalysis, ATP synthesis in the catalytic domain of F(1) is coupled via a rotary mechanism of the central stalk subunits to proton translocation. This protein is part of the stalk that links CF(0) to CF(1). It either transmits conformational changes from CF(0) to CF(1) or is implicated in proton conduction. The polypeptide is ATP synthase subunit delta (Sodalis glossinidius (strain morsitans)).